The chain runs to 103 residues: Large ribosomal subunit protein bL21 (103 aa).

Belongs to the bacterial ribosomal protein bL21 family. As to quaternary structure, part of the 50S ribosomal subunit. Contacts protein L20.

In terms of biological role, this protein binds to 23S rRNA in the presence of protein L20. The polypeptide is Large ribosomal subunit protein bL21 (Clostridium botulinum (strain Alaska E43 / Type E3)).